A 341-amino-acid polypeptide reads, in one-letter code: UDP-3-O-acylglucosamine N-acyltransferase (341 aa).

Catalysis depends on His237, which acts as the Proton acceptor.

It belongs to the transferase hexapeptide repeat family. LpxD subfamily. In terms of assembly, homotrimer.

It catalyses the reaction a UDP-3-O-[(3R)-3-hydroxyacyl]-alpha-D-glucosamine + a (3R)-hydroxyacyl-[ACP] = a UDP-2-N,3-O-bis[(3R)-3-hydroxyacyl]-alpha-D-glucosamine + holo-[ACP] + H(+). The protein operates within bacterial outer membrane biogenesis; LPS lipid A biosynthesis. Functionally, catalyzes the N-acylation of UDP-3-O-acylglucosamine using 3-hydroxyacyl-ACP as the acyl donor. Is involved in the biosynthesis of lipid A, a phosphorylated glycolipid that anchors the lipopolysaccharide to the outer membrane of the cell. The protein is UDP-3-O-acylglucosamine N-acyltransferase of Azoarcus sp. (strain BH72).